The primary structure comprises 154 residues: Movement protein (154 aa).

Disordered regions lie at residues 83–103 (SSPT…HTRP) and 123–154 (WVAT…GRVR).

The protein belongs to the luteoviruses movement protein family.

Functionally, transports viral genome to neighboring plant cells directly through plasmosdesmata, without any budding. The movement protein allows efficient cell to cell propagation, by bypassing the host cell wall barrier. The polypeptide is Movement protein (Barley yellow dwarf virus (isolate MAV) (BYDV)).